The sequence spans 450 residues: UPF0210 protein MK1214 (450 aa).

The protein belongs to the UPF0210 family.

In Methanopyrus kandleri (strain AV19 / DSM 6324 / JCM 9639 / NBRC 100938), this protein is UPF0210 protein MK1214.